A 435-amino-acid polypeptide reads, in one-letter code: Asparagine--tRNA ligase (435 aa).

This sequence belongs to the class-II aminoacyl-tRNA synthetase family. As to quaternary structure, homodimer.

It localises to the cytoplasm. The enzyme catalyses tRNA(Asn) + L-asparagine + ATP = L-asparaginyl-tRNA(Asn) + AMP + diphosphate + H(+). The sequence is that of Asparagine--tRNA ligase from Leptospira interrogans serogroup Icterohaemorrhagiae serovar copenhageni (strain Fiocruz L1-130).